Consider the following 316-residue polypeptide: 4-amino-5-hydroxymethyl-2-methylpyrimidine phosphate synthase (316 aa).

Lysine 66 is subject to N6-(pyridoxal phosphate)lysine. Residue histidine 70 is part of the active site. Position 118–121 (118–121 (GEFG)) interacts with pyridoxal 5'-phosphate. Residues 191-195 (CCCFC) carry the CCCFC; essential for catalytic activity, may be the site of iron coordination motif.

The protein belongs to the NMT1/THI5 family. Homodimer. Fe cation is required as a cofactor.

The catalysed reaction is N(6)-(pyridoxal phosphate)-L-lysyl-[4-amino-5-hydroxymethyl-2-methylpyrimidine phosphate synthase] + L-histidyl-[4-amino-5-hydroxymethyl-2-methylpyrimidine phosphate synthase] + 2 Fe(3+) + 4 H2O = L-lysyl-[4-amino-5-hydroxymethyl-2-methylpyrimidine phosphate synthase] + (2S)-2-amino-5-hydroxy-4-oxopentanoyl-[4-amino-5-hydroxymethyl-2-methylpyrimidine phosphate synthase] + 4-amino-2-methyl-5-(phosphooxymethyl)pyrimidine + 3-oxopropanoate + 2 Fe(2+) + 2 H(+). Its pathway is cofactor biosynthesis; thiamine diphosphate biosynthesis. Functionally, responsible for the formation of the pyrimidine heterocycle in the thiamine biosynthesis pathway. Catalyzes the formation of hydroxymethylpyrimidine phosphate (HMP-P) from histidine and pyridoxal phosphate (PLP). The protein uses PLP and the active site histidine to form HMP-P, generating an inactive enzyme. The enzyme can only undergo a single turnover, which suggests it is a suicide enzyme. The sequence is that of 4-amino-5-hydroxymethyl-2-methylpyrimidine phosphate synthase from Legionella pneumophila subsp. pneumophila (strain Philadelphia 1 / ATCC 33152 / DSM 7513).